The following is a 479-amino-acid chain: Cardiolipin synthase A (479 aa).

Helical transmembrane passes span 8–28 (FFGYLLGLIHLLGIVAALHAV) and 38–58 (IAWAMPLFFIPYLTLIPYLVF). PLD phosphodiesterase domains follow at residues 218–245 (VNFRNHRKIVVVDGLVGFIGGHNVGDEY) and 392–419 (QPGFLHQKVVLVDDDVSAIGSANLDNRS). Catalysis depends on residues His223, Lys225, Asp230, His397, Lys399, and Asp404.

Belongs to the phospholipase D family. Cardiolipin synthase subfamily. ClsA sub-subfamily.

It localises to the cell inner membrane. It carries out the reaction 2 a 1,2-diacyl-sn-glycero-3-phospho-(1'-sn-glycerol) = a cardiolipin + glycerol. Catalyzes the reversible phosphatidyl group transfer from one phosphatidylglycerol molecule to another to form cardiolipin (CL) (diphosphatidylglycerol) and glycerol. The chain is Cardiolipin synthase A from Pseudomonas putida (strain GB-1).